The following is a 254-amino-acid chain: Anamorsin homolog (254 aa).

The tract at residues 4–132 (VQENNHVLYI…EIGSAAKLSL (129 aa)) is N-terminal SAM-like domain. Residues 132–167 (LGGNKAKVAAVWKLDVDDDDDERIDEDELLDEEDKV) form a linker region. Residues Cys177, Cys186, Cys189, and Cys191 each coordinate [2Fe-2S] cluster. The tract at residues 177 to 191 (CGTTGKRKACKDCSC) is fe-S binding site A. [4Fe-4S] cluster contacts are provided by Cys215, Cys218, Cys226, and Cys229. Short sequence motifs (cx2C motif) lie at residues 215-218 (CGSC) and 226-229 (CATC). Residues 215–229 (CGSCYLGDAFRCATC) form a fe-S binding site B region.

This sequence belongs to the anamorsin family. As to quaternary structure, monomer. The cofactor is [2Fe-2S] cluster. Requires [4Fe-4S] cluster as cofactor.

The protein localises to the cytoplasm. Its subcellular location is the mitochondrion intermembrane space. Its function is as follows. Component of the cytosolic iron-sulfur (Fe-S) protein assembly (CIA) machinery. Required for the maturation of extramitochondrial Fe-S proteins. Part of an electron transfer chain functioning in an early step of cytosolic Fe-S biogenesis, facilitating the de novo assembly of a [4Fe-4S] cluster on the cytosolic Fe-S scaffold complex. Electrons are transferred from NADPH via a FAD- and FMN-containing diflavin oxidoreductase. Together with the diflavin oxidoreductase, also required for the assembly of the diferric tyrosyl radical cofactor of ribonucleotide reductase (RNR), probably by providing electrons for reduction during radical cofactor maturation in the catalytic small subunit. The polypeptide is Anamorsin homolog (Aedes aegypti (Yellowfever mosquito)).